A 111-amino-acid chain; its full sequence is uncharacterized protein (111 aa).

This is an uncharacterized protein from Escherichia coli (strain K12).